The following is a 186-amino-acid chain: Napin embryo-specific (186 aa).

The N-terminal stretch at 1–21 (MANKLFLVSATLALFFLLTNA) is a signal peptide. 2 consecutive propeptides follow at residues 22-38 (SVYRTVVEVDEDDATNP) and 77-97 (PSWTLDGEFDFEDDVENQQQG).

Belongs to the 2S seed storage albumins family. In terms of assembly, the mature protein consists of a small and a large chain linked by disulfide bonds. Cotyledons and the axis.

Functionally, the small, basic, water-soluble napins are one of the two major kinds of storage proteins synthesized in the seed during its maturation. The polypeptide is Napin embryo-specific (Brassica napus (Rape)).